The chain runs to 566 residues: Proline--tRNA ligase 1 (566 aa).

The protein belongs to the class-II aminoacyl-tRNA synthetase family. ProS type 1 subfamily. Homodimer.

Its subcellular location is the cytoplasm. It carries out the reaction tRNA(Pro) + L-proline + ATP = L-prolyl-tRNA(Pro) + AMP + diphosphate. In terms of biological role, catalyzes the attachment of proline to tRNA(Pro) in a two-step reaction: proline is first activated by ATP to form Pro-AMP and then transferred to the acceptor end of tRNA(Pro). As ProRS can inadvertently accommodate and process non-cognate amino acids such as alanine and cysteine, to avoid such errors it has two additional distinct editing activities against alanine. One activity is designated as 'pretransfer' editing and involves the tRNA(Pro)-independent hydrolysis of activated Ala-AMP. The other activity is designated 'posttransfer' editing and involves deacylation of mischarged Ala-tRNA(Pro). The misacylated Cys-tRNA(Pro) is not edited by ProRS. The chain is Proline--tRNA ligase 1 from Bacillus thuringiensis subsp. konkukian (strain 97-27).